The sequence spans 536 residues: Thiamine transport system permease protein ThiP (536 aa).

12 helical membrane-spanning segments follow: residues 12–32 (WLIP…AAFL), 58–78 (FSFW…IFLA), 95–115 (LCAM…LSVY), 134–154 (FSPY…LPMA), 199–219 (VAAL…SLGG), 240–260 (PARA…LVLL), 293–313 (VLIV…IVDG), 334–354 (SLRI…MLLW), 374–394 (SGML…FLLL), 404–424 (ADGI…LKVL), 463–483 (AQAL…VALF), and 506–526 (DGAV…TVIE). Residues 56 to 261 (VRFSFWQAFL…VCCLGLVLLS (206 aa)) form the ABC transmembrane type-1 1 domain. The ABC transmembrane type-1 2 domain occupies 331-525 (LWTSLRIALA…LLCFLLFTVI (195 aa)).

This sequence belongs to the binding-protein-dependent transport system permease family. CysTW subfamily. The complex is composed of two ATP-binding proteins (ThiQ), two transmembrane proteins (ThiP) and a solute-binding protein (ThiB).

Its subcellular location is the cell inner membrane. Its activity is regulated as follows. Transport is inhibited by the sulfhydryl-specific modifier N-ethylmaleimide. Its function is as follows. Part of the ABC transporter complex ThiBPQ involved in thiamine import. Probably responsible for the translocation of the substrate across the membrane. The sequence is that of Thiamine transport system permease protein ThiP (thiP) from Escherichia coli (strain K12).